The following is a 136-amino-acid chain: Large ribosomal subunit protein uL16 (136 aa).

The protein belongs to the universal ribosomal protein uL16 family. In terms of assembly, part of the 50S ribosomal subunit.

Functionally, binds 23S rRNA and is also seen to make contacts with the A and possibly P site tRNAs. In Pseudoalteromonas atlantica (strain T6c / ATCC BAA-1087), this protein is Large ribosomal subunit protein uL16.